The sequence spans 497 residues: Glycerol kinase (497 aa).

Threonine 12 is a binding site for ADP. Positions 12, 13, and 14 each coordinate ATP. Threonine 12 lines the sn-glycerol 3-phosphate pocket. Residue arginine 16 participates in ADP binding. Residues arginine 82, glutamate 83, tyrosine 134, and aspartate 243 each contribute to the sn-glycerol 3-phosphate site. Residues arginine 82, glutamate 83, tyrosine 134, aspartate 243, and glutamine 244 each coordinate glycerol. Residues threonine 265 and glycine 308 each coordinate ADP. The ATP site is built by threonine 265, glycine 308, glutamine 312, and glycine 409. ADP-binding residues include glycine 409 and asparagine 413.

The protein belongs to the FGGY kinase family. As to quaternary structure, homotetramer and homodimer (in equilibrium).

The enzyme catalyses glycerol + ATP = sn-glycerol 3-phosphate + ADP + H(+). Its pathway is polyol metabolism; glycerol degradation via glycerol kinase pathway; sn-glycerol 3-phosphate from glycerol: step 1/1. With respect to regulation, activated by phosphorylation and inhibited by fructose 1,6-bisphosphate (FBP). Functionally, key enzyme in the regulation of glycerol uptake and metabolism. Catalyzes the phosphorylation of glycerol to yield sn-glycerol 3-phosphate. This is Glycerol kinase from Thermoanaerobacter pseudethanolicus (strain ATCC 33223 / 39E) (Clostridium thermohydrosulfuricum).